A 623-amino-acid chain; its full sequence is Chaperone protein HtpG (623 aa).

The a; substrate-binding stretch occupies residues 1–328; the sequence is MTQEKKKFDA…SEDLPLNISR (328 aa). The b stretch occupies residues 329–544; it reads ESLQHNSILD…ESAMDIRMER (216 aa). The tract at residues 545–623 is c; sequence FLIEQKQIAN…DIVQKAILSL (79 aa).

This sequence belongs to the heat shock protein 90 family. In terms of assembly, homodimer.

It localises to the cytoplasm. Molecular chaperone. Has ATPase activity. This Rickettsia canadensis (strain McKiel) protein is Chaperone protein HtpG.